The primary structure comprises 432 residues: Glutamate-1-semialdehyde 2,1-aminomutase (432 aa).

Lys-270 carries the N6-(pyridoxal phosphate)lysine modification.

The protein belongs to the class-III pyridoxal-phosphate-dependent aminotransferase family. HemL subfamily. As to quaternary structure, homodimer. It depends on pyridoxal 5'-phosphate as a cofactor.

It localises to the cytoplasm. The enzyme catalyses (S)-4-amino-5-oxopentanoate = 5-aminolevulinate. It participates in porphyrin-containing compound metabolism; protoporphyrin-IX biosynthesis; 5-aminolevulinate from L-glutamyl-tRNA(Glu): step 2/2. This chain is Glutamate-1-semialdehyde 2,1-aminomutase, found in Acinetobacter baumannii (strain ATCC 17978 / DSM 105126 / CIP 53.77 / LMG 1025 / NCDC KC755 / 5377).